The chain runs to 99 residues: Nucleoid-associated protein UPA3_0088 (99 aa).

Belongs to the YbaB/EbfC family. Homodimer.

Its subcellular location is the cytoplasm. The protein resides in the nucleoid. Binds to DNA and alters its conformation. May be involved in regulation of gene expression, nucleoid organization and DNA protection. The polypeptide is Nucleoid-associated protein UPA3_0088 (Ureaplasma parvum serovar 3 (strain ATCC 27815 / 27 / NCTC 11736)).